Consider the following 178-residue polypeptide: Protein GrpE (178 aa).

A compositionally biased stretch (polar residues) spans Met-1–Gln-11. The tract at residues Met-1–Glu-31 is disordered. Residues Glu-19–Glu-31 show a composition bias toward low complexity.

Belongs to the GrpE family. As to quaternary structure, homodimer.

The protein resides in the cytoplasm. Its function is as follows. Participates actively in the response to hyperosmotic and heat shock by preventing the aggregation of stress-denatured proteins, in association with DnaK and GrpE. It is the nucleotide exchange factor for DnaK and may function as a thermosensor. Unfolded proteins bind initially to DnaJ; upon interaction with the DnaJ-bound protein, DnaK hydrolyzes its bound ATP, resulting in the formation of a stable complex. GrpE releases ADP from DnaK; ATP binding to DnaK triggers the release of the substrate protein, thus completing the reaction cycle. Several rounds of ATP-dependent interactions between DnaJ, DnaK and GrpE are required for fully efficient folding. This chain is Protein GrpE, found in Burkholderia thailandensis (strain ATCC 700388 / DSM 13276 / CCUG 48851 / CIP 106301 / E264).